A 396-amino-acid polypeptide reads, in one-letter code: MLITVYCVRRDLSEVTFSLQVSPDFELRNFKVLCEAESRVPVEEIQIIHMERLLIEDHCSLGSYGLKDGDIVVLLQKDNVGPRAPGRAPNQPRVDFSGIAVPGTSSSRPQHPGQQQQRTPAAQRSQGLASGEKVAGLQGLGSPALIRSMLLSNPHDLSLLKERNPPLAEALLSGSLETFSQVLMEQQREKALREQERLRLYTADPLDREAQAKIEEEIRQQNIEENMNIAIEEAPESFGQVTMLYINCKVNGHPLKAFVDSGAQMTIMSQACAERCNIMRLVDRRWAGVAKGVGTQRIIGRVHLAQIQIEGDFLQCSFSILEDQPMDMLLGLDMLRRHQCSIDLKKNVLVIGTTGTQTYFLPEGELPLCSRMVSGQDESSDKEITHSVMDSGRKEH.

Residues 1–81 (MLITVYCVRR…VVLLQKDNVG (81 aa)) form the Ubiquitin-like domain. The tract at residues 82 to 130 (PRAPGRAPNQPRVDFSGIAVPGTSSSRPQHPGQQQQRTPAAQRSQGLAS) is disordered. Polar residues predominate over residues 103–128 (GTSSSRPQHPGQQQQRTPAAQRSQGL). Residue D260 is part of the active site. Positions 374 to 396 (SGQDESSDKEITHSVMDSGRKEH) are disordered. Residues 379 to 396 (SSDKEITHSVMDSGRKEH) are compositionally biased toward basic and acidic residues.

The protein belongs to the DDI1 family.

With respect to regulation, inhibited by the proteinase inhibitors amprenavir, indinavir, lopinavir, isovaleryl pepstatin, ritonavir and saquinavir. In terms of biological role, probable aspartic protease. Seems to act as a proteasomal shuttle which links the proteasome and replication fork proteins like RTF2. Required, with DDI2, for cellular survival following replication stress. Together or redudantly with DDI2, removes RTF2 from stalled forks to allow cell cycle progression after replication stress and maintains genome integrity. In Homo sapiens (Human), this protein is Protein DDI1 homolog 1 (DDI1).